The primary structure comprises 102 residues: P antigen family member 4 (102 aa).

Positions 1 to 10 (MSARVRSRSR) are enriched in basic residues. Positions 1-102 (MSARVRSRSR…KTKEAGDGQP (102 aa)) are disordered. A Phosphoserine; by CLK2 modification is found at S7. A Phosphoserine; by HIPK1 and CLK2 modification is found at S9. Over residues 45–85 (GQEREGTPPIEERKVEGDCQEMDLEKTRSERGDGSDVKEKT) the composition is skewed to basic and acidic residues. T51 carries the phosphothreonine; by HIPK1 and CLK2 modification. T71 is modified (phosphothreonine; by CLK2). Phosphoserine; by CLK2 is present on residues S73 and S79. Residues T85 and T94 each carry the phosphothreonine; by CLK2 modification.

The protein belongs to the GAGE family. As to quaternary structure, interacts with JUN. In terms of processing, HIPK1-mediated phosphorylation at Thr-51 leads to the compaction of its intrinsically disordered conformation and is critical for its ability to potentiate the transcriptional activator activity of JUN inspite of a reduced interaction with JUN. CLK2-mediated phosphorylation at multiple Ser and Thr residues attenuates its ability to potentiate JUN transcriptional activator activity. Expressed at basal lvels in the adult normal prostate gland but is highly up-regulated in the fetal prostate and prostate cancer cells. Preferentially expressed in normal male and female reproductive tissues, testis, fallopian tube, uterus, and placenta, as well as in testicular cancer, uterine cancer, cervical cancer and kidney cancer.

The protein resides in the cytoplasm. It localises to the nucleus. Its subcellular location is the mitochondrion. In terms of biological role, intrinsically disordered protein that potentiates the transcriptional activator activity of JUN. Protects cells from stress-induced apoptosis by inhibiting reactive oxygen species (ROS) production and via regulation of the MAPK signaling pathway. This chain is P antigen family member 4 (PAGE4), found in Homo sapiens (Human).